Consider the following 284-residue polypeptide: MTDKMQSLALAPVGNLDSYIRAANAWPMLSADEERALAEKLHYHGDLEAAKTLILSHLRFVVHIARNYAGYGLPQADLIQEGNIGLMKAVRRFNPEVGVRLVSFAVHWIKAEIHEYVLRNWRIVKVATTKAQRKLFFNLRKTKQRLGWFNQDEVEMVARELGVTSKDVREMESRMAAQDMTFDLSSDDDSDSQPMAPVLYLQDKSSNFADGIEDDNWEEQAANRLTDAMQGLDERSQDIIRARWLDEDNKSTLQELADRYGVSAERVRQLEKNAMKKLRAAIEA.

Positions 53–122 are sigma-70 factor domain-2; the sequence is LILSHLRFVV…IHEYVLRNWR (70 aa). Residues 77–80 carry the Interaction with polymerase core subunit RpoC motif; that stretch reads DLIQ. A sigma-70 factor domain-4 region spans residues 228-280; it reads AMQGLDERSQDIIRARWLDEDNKSTLQELADRYGVSAERVRQLEKNAMKKLRA. The segment at residues 253 to 272 is a DNA-binding region (H-T-H motif); sequence LQELADRYGVSAERVRQLEK.

Belongs to the sigma-70 factor family. RpoH subfamily. In terms of assembly, interacts with the RNA polymerase core enzyme.

The protein resides in the cytoplasm. Its function is as follows. Sigma factors are initiation factors that promote the attachment of RNA polymerase to specific initiation sites and are then released. This sigma factor is involved in regulation of expression of heat shock genes. The protein is RNA polymerase sigma factor RpoH of Escherichia coli O6:H1 (strain CFT073 / ATCC 700928 / UPEC).